Reading from the N-terminus, the 402-residue chain is CMP-sialic acid transporter 3 (402 aa).

Topologically, residues 1–42 (MSGEVECRVCHAKVQVPMAAAAVSKAYDIHRSSVSSRQRALN) are cytoplasmic. A helical membrane pass occupies residues 43–63 (VLLVSGDCVLAGLQPILVYMC). At 64–73 (KVDGKFKFSP) the chain is on the lumenal side. Residues 74–94 (VSVNFLTEITKIIFAIIMLCI) form a helical membrane-spanning segment. The Cytoplasmic segment spans residues 95–118 (QARRLKVGEKPFLTVSTFMQAARN). The chain crosses the membrane as a helical span at residues 119–139 (NVLLAVPALFYAINNYMKFVM). Residues 140 to 146 (QLYFNPA) are Lumenal-facing. Residues 147-167 (TVKMLGNLKVLVIAVLLKVIM) traverse the membrane as a helical segment. The Cytoplasmic portion of the chain corresponds to 168–170 (RRR). Residues 171 to 191 (FSTIQWEALALLLIGISVNQL) traverse the membrane as a helical segment. The Lumenal portion of the chain corresponds to 192-202 (KSLPEGSSTLG). Residues 203-223 (LPVAAGAYLYTLFFVTVPALA) traverse the membrane as a helical segment. Over 224–243 (SVYNEKALKSQFDTSIYLQN) the chain is Cytoplasmic. Residues 244 to 264 (LFLYGYGAIFNFLGLVITAII) traverse the membrane as a helical segment. The Lumenal portion of the chain corresponds to 265 to 280 (QGPSSFNILEGHSKAT). A helical membrane pass occupies residues 281 to 301 (MFLICNNAAQGILSSFFFKYA). Topologically, residues 302–321 (DTILKKYSSTIATIFTGVAS) are cytoplasmic. A helical membrane pass occupies residues 322–342 (AVLFGHTLTINFVLAISIVII). The Lumenal portion of the chain corresponds to 343–402 (SMHQYLSNQIKDEVPSSKIEMGDAHEHRSKESVVVNVSDSIATEAKHRHGTDERQPLLPV).

The protein belongs to the nucleotide-sugar transporter family. CMP-Sialate:CMP antiporter (TC 2.A.7.12) subfamily.

It is found in the golgi apparatus membrane. Functionally, sugar transporter involved in the transport of CMP-sialic acid from the cytoplasm into the Golgi. May transport important nucleotide sugars such as CMP-Kdo (2-keto-3-deoxy-D-manno-octulosonic acid) in physiological conditions. In Oryza sativa subsp. indica (Rice), this protein is CMP-sialic acid transporter 3.